Consider the following 236-residue polypeptide: 2-C-methyl-D-erythritol 4-phosphate cytidylyltransferase (236 aa).

Belongs to the IspD/TarI cytidylyltransferase family. IspD subfamily. As to quaternary structure, homodimer.

The catalysed reaction is 2-C-methyl-D-erythritol 4-phosphate + CTP + H(+) = 4-CDP-2-C-methyl-D-erythritol + diphosphate. The protein operates within isoprenoid biosynthesis; isopentenyl diphosphate biosynthesis via DXP pathway; isopentenyl diphosphate from 1-deoxy-D-xylulose 5-phosphate: step 2/6. Its function is as follows. Catalyzes the formation of 4-diphosphocytidyl-2-C-methyl-D-erythritol from CTP and 2-C-methyl-D-erythritol 4-phosphate (MEP). The chain is 2-C-methyl-D-erythritol 4-phosphate cytidylyltransferase from Escherichia coli O45:K1 (strain S88 / ExPEC).